A 512-amino-acid chain; its full sequence is ATP synthase subunit alpha (512 aa).

169-176 (GDRQTGKT) serves as a coordination point for ATP.

The protein belongs to the ATPase alpha/beta chains family. In terms of assembly, F-type ATPases have 2 components, CF(1) - the catalytic core - and CF(0) - the membrane proton channel. CF(1) has five subunits: alpha(3), beta(3), gamma(1), delta(1), epsilon(1). CF(0) has three main subunits: a(1), b(2) and c(9-12). The alpha and beta chains form an alternating ring which encloses part of the gamma chain. CF(1) is attached to CF(0) by a central stalk formed by the gamma and epsilon chains, while a peripheral stalk is formed by the delta and b chains.

The protein resides in the cell inner membrane. It catalyses the reaction ATP + H2O + 4 H(+)(in) = ADP + phosphate + 5 H(+)(out). In terms of biological role, produces ATP from ADP in the presence of a proton gradient across the membrane. The alpha chain is a regulatory subunit. In Rickettsia akari (strain Hartford), this protein is ATP synthase subunit alpha.